Here is a 470-residue protein sequence, read N- to C-terminus: FLYWCH transcription factor 2 (470 aa).

Residues 102–148 form a disordered region; sequence SQLISEDTRPSASSSPSSTATAVSNSGQSNATSTSSSSTEPEYKPRN. Low complexity predominate over residues 111–140; that stretch reads PSASSSPSSTATAVSNSGQSNATSTSSSST. The FLYWCH-type zinc-finger motif lies at 145-204; that stretch reads KPRNVREKVYADGYIMSFDKKSCCGTKEFWRCERKNDCNARMHSDINTREIVRKLHPHNH.

Its function is as follows. Probable transcription factor. May bind to the promoters of target genes, including micro-RNA genes, in order to repress expression, and acting redundantly with flh-1 and flh-3. The polypeptide is FLYWCH transcription factor 2 (Caenorhabditis elegans).